Here is a 294-residue protein sequence, read N- to C-terminus: Release factor glutamine methyltransferase (294 aa).

E148 and N201 together coordinate S-adenosyl-L-methionine. A substrate-binding site is contributed by 201-204 (NPPY).

The protein belongs to the protein N5-glutamine methyltransferase family. PrmC subfamily.

It carries out the reaction L-glutaminyl-[peptide chain release factor] + S-adenosyl-L-methionine = N(5)-methyl-L-glutaminyl-[peptide chain release factor] + S-adenosyl-L-homocysteine + H(+). Its function is as follows. Methylates the class 1 translation termination release factors RF1/PrfA and RF2/PrfB on the glutamine residue of the universally conserved GGQ motif. This Bifidobacterium longum (strain NCC 2705) protein is Release factor glutamine methyltransferase.